Here is a 351-residue protein sequence, read N- to C-terminus: Phosphate acyltransferase (351 aa).

Belongs to the PlsX family. As to quaternary structure, homodimer. Probably interacts with PlsY.

It is found in the cytoplasm. It carries out the reaction a fatty acyl-[ACP] + phosphate = an acyl phosphate + holo-[ACP]. Its pathway is lipid metabolism; phospholipid metabolism. Catalyzes the reversible formation of acyl-phosphate (acyl-PO(4)) from acyl-[acyl-carrier-protein] (acyl-ACP). This enzyme utilizes acyl-ACP as fatty acyl donor, but not acyl-CoA. This Neisseria meningitidis serogroup A / serotype 4A (strain DSM 15465 / Z2491) protein is Phosphate acyltransferase.